The sequence spans 86 residues: Toxin To8 (86 aa).

The N-terminal stretch at M1–C20 is a signal peptide. Positions K21–G83 constitute an LCN-type CS-alpha/beta domain. Cystine bridges form between C31-C82, C35-C57, C43-C63, and C47-C65. At C82 the chain carries Cysteine amide.

Belongs to the long (4 C-C) scorpion toxin superfamily. Sodium channel inhibitor family. Beta subfamily. Expressed by the venom gland.

It is found in the secreted. Its function is as follows. Beta toxins bind voltage-independently at site-4 of sodium channels (Nav) and shift the voltage of activation toward more negative potentials thereby affecting sodium channel activation and promoting spontaneous and repetitive firing. This is Toxin To8 from Tityus obscurus (Amazonian scorpion).